The following is a 530-amino-acid chain: B3 domain-containing protein REM-like 3 (530 aa).

DNA-binding regions (TF-B3) lie at residues 11–103 and 144–241; these read KPHF…FGLS and DFVV…FPLE. The disordered stretch occupies residues 251–276; that stretch reads SKKVKQEVEHEESVKEETNVESGKLK. Positions 254 to 276 are enriched in basic and acidic residues; that stretch reads VKQEVEHEESVKEETNVESGKLK. DNA-binding regions (TF-B3) lie at residues 296–393 and 431–530; these read NFVV…FPLE and SFVV…WDKK.

Its subcellular location is the nucleus. In Arabidopsis thaliana (Mouse-ear cress), this protein is B3 domain-containing protein REM-like 3.